A 118-amino-acid polypeptide reads, in one-letter code: Ribonuclease P protein component (118 aa).

Belongs to the RnpA family. In terms of assembly, consists of a catalytic RNA component (M1 or rnpB) and a protein subunit.

The catalysed reaction is Endonucleolytic cleavage of RNA, removing 5'-extranucleotides from tRNA precursor.. RNaseP catalyzes the removal of the 5'-leader sequence from pre-tRNA to produce the mature 5'-terminus. It can also cleave other RNA substrates such as 4.5S RNA. The protein component plays an auxiliary but essential role in vivo by binding to the 5'-leader sequence and broadening the substrate specificity of the ribozyme. The chain is Ribonuclease P protein component from Shewanella sp. (strain ANA-3).